Here is a 258-residue protein sequence, read N- to C-terminus: Imidazole glycerol phosphate synthase subunit HisF (258 aa).

Residues Asp11 and Asp130 contribute to the active site.

The protein belongs to the HisA/HisF family. Heterodimer of HisH and HisF.

It localises to the cytoplasm. The enzyme catalyses 5-[(5-phospho-1-deoxy-D-ribulos-1-ylimino)methylamino]-1-(5-phospho-beta-D-ribosyl)imidazole-4-carboxamide + L-glutamine = D-erythro-1-(imidazol-4-yl)glycerol 3-phosphate + 5-amino-1-(5-phospho-beta-D-ribosyl)imidazole-4-carboxamide + L-glutamate + H(+). It functions in the pathway amino-acid biosynthesis; L-histidine biosynthesis; L-histidine from 5-phospho-alpha-D-ribose 1-diphosphate: step 5/9. In terms of biological role, IGPS catalyzes the conversion of PRFAR and glutamine to IGP, AICAR and glutamate. The HisF subunit catalyzes the cyclization activity that produces IGP and AICAR from PRFAR using the ammonia provided by the HisH subunit. In Xanthomonas euvesicatoria pv. vesicatoria (strain 85-10) (Xanthomonas campestris pv. vesicatoria), this protein is Imidazole glycerol phosphate synthase subunit HisF.